Consider the following 341-residue polypeptide: Glycerol-3-phosphate dehydrogenase [NAD(P)+] (341 aa).

Positions 14, 15, 35, and 108 each coordinate NADPH. Positions 108 and 136 each coordinate sn-glycerol 3-phosphate. Alanine 140 contributes to the NADPH binding site. Lysine 191, aspartate 244, serine 254, arginine 255, and asparagine 256 together coordinate sn-glycerol 3-phosphate. Lysine 191 (proton acceptor) is an active-site residue. Arginine 255 is an NADPH binding site. 2 residues coordinate NADPH: valine 279 and glutamate 281.

Belongs to the NAD-dependent glycerol-3-phosphate dehydrogenase family.

The protein resides in the cytoplasm. It carries out the reaction sn-glycerol 3-phosphate + NAD(+) = dihydroxyacetone phosphate + NADH + H(+). The catalysed reaction is sn-glycerol 3-phosphate + NADP(+) = dihydroxyacetone phosphate + NADPH + H(+). It participates in membrane lipid metabolism; glycerophospholipid metabolism. In terms of biological role, catalyzes the reduction of the glycolytic intermediate dihydroxyacetone phosphate (DHAP) to sn-glycerol 3-phosphate (G3P), the key precursor for phospholipid synthesis. This chain is Glycerol-3-phosphate dehydrogenase [NAD(P)+], found in Pseudomonas entomophila (strain L48).